The sequence spans 121 residues: Small ribosomal subunit protein uS13 (121 aa).

The segment at 91 to 121 (HRRGLPVRGQNTKNNARTRKGKKASMAGKKK) is disordered. Positions 106 to 121 (ARTRKGKKASMAGKKK) are enriched in basic residues.

This sequence belongs to the universal ribosomal protein uS13 family. Part of the 30S ribosomal subunit. Forms a loose heterodimer with protein S19. Forms two bridges to the 50S subunit in the 70S ribosome.

Located at the top of the head of the 30S subunit, it contacts several helices of the 16S rRNA. In the 70S ribosome it contacts the 23S rRNA (bridge B1a) and protein L5 of the 50S subunit (bridge B1b), connecting the 2 subunits; these bridges are implicated in subunit movement. Contacts the tRNAs in the A and P-sites. The sequence is that of Small ribosomal subunit protein uS13 from Lacticaseibacillus paracasei (strain ATCC 334 / BCRC 17002 / CCUG 31169 / CIP 107868 / KCTC 3260 / NRRL B-441) (Lactobacillus paracasei).